We begin with the raw amino-acid sequence, 85 residues long: uncharacterized protein (85 aa).

Belongs to the SF3B5 family.

This is an uncharacterized protein from Schizosaccharomyces pombe (strain 972 / ATCC 24843) (Fission yeast).